The primary structure comprises 202 residues: Peptide methionine sulfoxide reductase A1 (202 aa).

The disordered stretch occupies residues 1 to 20 (MNILNKLGIGSSRQTNMDPS). Ser189 carries the post-translational modification Phosphoserine.

Belongs to the MsrA Met sulfoxide reductase family.

It localises to the cytoplasm. The protein resides in the cytosol. The enzyme catalyses L-methionyl-[protein] + [thioredoxin]-disulfide + H2O = L-methionyl-(S)-S-oxide-[protein] + [thioredoxin]-dithiol. The catalysed reaction is [thioredoxin]-disulfide + L-methionine + H2O = L-methionine (S)-S-oxide + [thioredoxin]-dithiol. Catalyzes the reduction of methionine sulfoxide (MetSO) to methionine in proteins. Plays a protective role against oxidative stress by restoring activity to proteins that have been inactivated by methionine oxidation. MSRA family specifically reduces the MetSO S-enantiomer. The chain is Peptide methionine sulfoxide reductase A1 (MSRA1) from Arabidopsis thaliana (Mouse-ear cress).